A 1071-amino-acid polypeptide reads, in one-letter code: DNA-directed RNA polymerase subunit beta (1071 aa).

The protein belongs to the RNA polymerase beta chain family. In plastids the minimal PEP RNA polymerase catalytic core is composed of four subunits: alpha, beta, beta', and beta''. When a (nuclear-encoded) sigma factor is associated with the core the holoenzyme is formed, which can initiate transcription.

It localises to the plastid. Its subcellular location is the chloroplast. The catalysed reaction is RNA(n) + a ribonucleoside 5'-triphosphate = RNA(n+1) + diphosphate. DNA-dependent RNA polymerase catalyzes the transcription of DNA into RNA using the four ribonucleoside triphosphates as substrates. This is DNA-directed RNA polymerase subunit beta from Nymphaea alba (White water-lily).